We begin with the raw amino-acid sequence, 590 residues long: Acetylcholinesterase (590 aa).

Positions 1 to 24 are cleaved as a signal peptide; that stretch reads MREMNLLVTSSLGVLLHLVVLCQA. The N-linked (GlcNAc...) asparagine glycan is linked to Asn-83. A disulfide bridge connects residues Cys-91 and Cys-118. Ser-224 acts as the Acyl-ester intermediate in catalysis. A disulfide bond links Cys-278 and Cys-289. Glu-351 serves as the catalytic Charge relay system. Cys-426 and Cys-545 form a disulfide bridge. An N-linked (GlcNAc...) asparagine glycan is attached at Asn-440. His-464 functions as the Charge relay system in the catalytic mechanism. N-linked (GlcNAc...) asparagine glycans are attached at residues Asn-481 and Asn-557. Ser-567 carries GPI-anchor amidated serine lipidation. Positions 568–590 are cleaved as a propeptide — removed in mature form; it reads SGTSSSKGIIFYVLFSILYLIFY.

It belongs to the type-B carboxylesterase/lipase family. Isoform H form is a homodimer; the asymmetric form is a disulfide-bonded oligomer composed of a collagenic subunit (Q) and a variable number of T catalytic subunits. Post-translationally, an interchain disulfide bond is present in what becomes position 596 of the T isoform. In terms of tissue distribution, found in the synapses and to a lower extent in extrajunctional areas of muscle and nerve, and on erythrocyte membranes.

Its subcellular location is the cell membrane. It is found in the synapse. The catalysed reaction is acetylcholine + H2O = choline + acetate + H(+). Functionally, terminates signal transduction at the neuromuscular junction by rapid hydrolysis of the acetylcholine released into the synaptic cleft. May be involved in cell-cell interactions. The polypeptide is Acetylcholinesterase (ache) (Torpedo marmorata (Marbled electric ray)).